Here is a 626-residue protein sequence, read N- to C-terminus: DNA-directed RNA polymerase subunit beta C-terminal section (626 aa).

The tract at residues 287–307 is disordered; that stretch reads NTKSKNTGKGSKPPRASKAQN.

This sequence belongs to the RNA polymerase beta chain family. In terms of assembly, in plastids the minimal PEP RNA polymerase catalytic core is composed of four subunits: alpha, beta, beta', and beta''. When a (nuclear-encoded) sigma factor is associated with the core the holoenzyme is formed, which can initiate transcription.

The protein resides in the plastid. It localises to the chloroplast. It catalyses the reaction RNA(n) + a ribonucleoside 5'-triphosphate = RNA(n+1) + diphosphate. Functionally, DNA-dependent RNA polymerase catalyzes the transcription of DNA into RNA using the four ribonucleoside triphosphates as substrates. The protein is DNA-directed RNA polymerase subunit beta C-terminal section (rpoB2) of Chlamydomonas reinhardtii (Chlamydomonas smithii).